The chain runs to 465 residues: MFPNSPDAFHQVRMMQSSIKASNFKLQSMEFRCHSNNVCEYQMEMLHHLLSVEAKTLPSLSLIEQQPEIKLGMRPLLLDFLMEVITILNLSRSTFPLTVNLIDRYCSTRIVKKQHYQLLGLTSLWISCKNLDSKFKVPTLNDLRKICVDSYYKELFVEMEKHILKSLEWVVNAPTFDAFIDLYSNLLISNSSNFEVANIIKKSSHKIKLFSNYIGELFQFYPNIYYDYTSSQIALIAILITVLTLKIPVDLISLLNFYNGLVKTEMFKSNVEQGAEDQFEEILSVDSFKSLFNKSFFKNLIKIIDNPPSSLKIKYFAENGKYSVLMKQLVTTASNTLKCILDPVPTTPKANSFVKHQQQQHHYHPRPPMSINTSMIPLTPVSNSTSPNRFSPDQIFSENESTPGIAFGTMTPDSQSTSPGEKRSYECIDELEIGTSTIAGYTLKNHDTLKRSKSANYGTLFYLQQ.

This sequence belongs to the cyclin family.

In terms of biological role, essential for the control of the cell cycle at the G1/S (start) transition. Interacts with the CDC28 protein kinase to form MPF. The protein is G1/S-specific cyclin CLN2 (CLN2) of Candida albicans (Yeast).